The chain runs to 309 residues: Tagatose-6-phosphate kinase (309 aa).

This sequence belongs to the carbohydrate kinase PfkB family. LacC subfamily.

It catalyses the reaction D-tagatofuranose 6-phosphate + ATP = D-tagatofuranose 1,6-bisphosphate + ADP + H(+). Its pathway is carbohydrate metabolism; D-tagatose 6-phosphate degradation; D-glyceraldehyde 3-phosphate and glycerone phosphate from D-tagatose 6-phosphate: step 1/2. This is Tagatose-6-phosphate kinase from Streptococcus pyogenes serotype M4 (strain MGAS10750).